The chain runs to 250 residues: Lectin 1 (250 aa).

N-linked (GlcNAc...) asparagine; partial glycosylation occurs at Asn119. Residues Glu128 and Asp130 each coordinate Mn(2+). Ca(2+)-binding residues include Asp130, Tyr132, Asn138, and Asp141. Mn(2+) is bound by residues Asp141 and His146.

It belongs to the leguminous lectin family.

Its function is as follows. Di-N-acetylchitobiose specific lectin. This Laburnum alpinum (Scotch laburnum) protein is Lectin 1.